The primary structure comprises 967 residues: Leucine-rich repeat-containing G-protein coupled receptor 6 (967 aa).

Positions 1–24 (MPSPPGLRALWLCAALCASRRAGG) are cleaved as a signal peptide. Topologically, residues 25–567 (APQPGPGPTA…LFESWGIRLA (543 aa)) are extracellular. Residues 26–66 (PQPGPGPTACPAPCHCQEDGIMLSADCSELGLSAVPGDLDP) enclose the LRRNT domain. An N-linked (GlcNAc...) asparagine glycan is attached at asparagine 77. 15 LRR repeats span residues 91-112 (FLEE…AFSG), 115-136 (SLKI…ALWE), 139-160 (SLQS…SFEG), 163-186 (SLRH…NNLP), 187-208 (ALQA…AFQN), 211-232 (SLVV…SFEG), 235-256 (NLET…IRTL), 258-279 (RLQE…AFMG), 282-303 (LLQT…AFQY), 306-328 (KLHT…KGTT), 329-350 (SLEI…MCQQ), 353-374 (RLRV…HRCQ), 375-396 (KLEE…TFSQ), 399-420 (SLQA…AFST), and 423-443 (SLVK…AGLG). Asparagine 208 is a glycosylation site (N-linked (GlcNAc...) asparagine). The chain crosses the membrane as a helical span at residues 568 to 588 (VWAIVLLSVLCNGLVLLTVFA). Over 589–598 (GGPVPLPPVK) the chain is Cytoplasmic. The helical transmembrane segment at 599–619 (FVVGAIAGANTLTGISCGLLA) threads the bilayer. Residues 620-644 (SVDALTFGQFSEYGARWETGLGCRA) are Extracellular-facing. Residues cysteine 642 and cysteine 717 are joined by a disulfide bond. The chain crosses the membrane as a helical span at residues 645–665 (TGFLAVLGSEASVLLLTLAAV). Topologically, residues 666–687 (QCSVSVSCVRAYGKSPSLGSVR) are cytoplasmic. Residues 688-708 (AGVLGCLALAGLAAALPLASV) form a helical membrane-spanning segment. The Extracellular portion of the chain corresponds to 709–727 (GEYGASPLCLPYAPPEGQP). Residues 728–748 (AALGFTVALVMMNSFCFLVVA) form a helical membrane-spanning segment. The Cytoplasmic segment spans residues 749–774 (GAYIKLYCDLPRGDFEAVWDCAMVRH). The chain crosses the membrane as a helical span at residues 775-795 (VAWLIFADGLLYCPVAFLSFA). The Extracellular segment spans residues 796 to 809 (SMLGLFPVTPEAVK). A helical membrane pass occupies residues 810-830 (SVLLVVLPLPACLNPLLYLLF). Topologically, residues 831 to 967 (NPHFRDDLRR…PSGLAFASHV (137 aa)) are cytoplasmic.

It belongs to the G-protein coupled receptor 1 family.

The protein resides in the cell membrane. Receptor for R-spondins that potentiates the canonical Wnt signaling pathway and acts as a marker of multipotent stem cells in the epidermis. Upon binding to R-spondins (RSPO1, RSPO2, RSPO3 or RSPO4), associates with phosphorylated LRP6 and frizzled receptors that are activated by extracellular Wnt receptors, triggering the canonical Wnt signaling pathway to increase expression of target genes. In contrast to classical G-protein coupled receptors, does not activate heterotrimeric G-proteins to transduce the signal. May act as a tumor suppressor. The chain is Leucine-rich repeat-containing G-protein coupled receptor 6 (LGR6) from Homo sapiens (Human).